The chain runs to 379 residues: Citrate synthase (379 aa).

Active-site residues include His225, His265, and Asp316.

This sequence belongs to the citrate synthase family. In terms of assembly, homodimer.

It carries out the reaction oxaloacetate + acetyl-CoA + H2O = citrate + CoA + H(+). It participates in carbohydrate metabolism; tricarboxylic acid cycle; isocitrate from oxaloacetate: step 1/2. Functionally, might regulate the synthesis and function of enzymes involved in later enzymatic steps of Krebs cycle. In Haloferax volcanii (strain ATCC 29605 / DSM 3757 / JCM 8879 / NBRC 14742 / NCIMB 2012 / VKM B-1768 / DS2) (Halobacterium volcanii), this protein is Citrate synthase (citZ).